Here is a 1954-residue protein sequence, read N- to C-terminus: Protein GREB1 (1954 aa).

3 disordered regions span residues 48–83, 238–342, and 1083–1235; these read LSSL…QLPP, LAAF…AKHE, and KGPK…GSSS. The segment covering 59–68 has biased composition (acidic residues); sequence NEEEEEDGEG. Low complexity predominate over residues 292–303; the sequence is SSLSALPRPSAL. Composition is skewed to basic and acidic residues over residues 1083–1099 and 1122–1133; these read KGPK…KLSS and GPVKRERSHSHD. Residues 1134 to 1146 are compositionally biased toward low complexity; sequence SASSSLSSRASGS. The span at 1187 to 1196 shows a compositional bias: polar residues; that stretch reads RVSQGSTVIS. A compositionally biased stretch (low complexity) spans 1224-1235; sequence SSQLSSSSGSSS. Residues 1873–1893 traverse the membrane as a helical segment; it reads DMVFSGLLLYLCDSFVGASFL.

It belongs to the GREB1 family.

Its subcellular location is the membrane. Functionally, may play a role in estrogen-stimulated cell proliferation. This Mus musculus (Mouse) protein is Protein GREB1 (Greb1).